The sequence spans 242 residues: Carboxy-S-adenosyl-L-methionine synthase (242 aa).

S-adenosyl-L-methionine-binding positions include Y39, 64-66 (GCS), 89-90 (DN), 117-118 (DI), N132, and R199.

This sequence belongs to the class I-like SAM-binding methyltransferase superfamily. Cx-SAM synthase family. As to quaternary structure, homodimer.

The catalysed reaction is prephenate + S-adenosyl-L-methionine = carboxy-S-adenosyl-L-methionine + 3-phenylpyruvate + H2O. Functionally, catalyzes the conversion of S-adenosyl-L-methionine (SAM) to carboxy-S-adenosyl-L-methionine (Cx-SAM). The chain is Carboxy-S-adenosyl-L-methionine synthase from Aliivibrio salmonicida (strain LFI1238) (Vibrio salmonicida (strain LFI1238)).